The primary structure comprises 340 residues: Meiotic recombination protein DMC1/LIM15 homolog (340 aa).

ATP is bound at residue 126–133 (GEFRTGKT). Arg230 is a dsDNA binding site. Residues Arg230, Phe233, Arg236, Arg242, and Arg311 each contribute to the ssDNA site. Residues Arg236 and Arg242 each contribute to the dsDNA site.

The protein belongs to the RecA family. DMC1 subfamily. Double stacked ring-shaped homooctamer. Interacts with BRCA2. Interacts with the MND1-PSMC3IP heterodimer. Interacts with RAD51AP1; the interaction is direct and stimulates DMC1-mediated homologous recombination. As to expression, testis.

Its subcellular location is the nucleus. The protein resides in the chromosome. In terms of biological role, participates in meiotic recombination, specifically in homologous strand assimilation, which is required for the resolution of meiotic double-strand breaks. This chain is Meiotic recombination protein DMC1/LIM15 homolog, found in Mus musculus (Mouse).